A 234-amino-acid chain; its full sequence is Sugar fermentation stimulation protein homolog (234 aa).

The protein belongs to the SfsA family.

This Pseudoalteromonas atlantica (strain T6c / ATCC BAA-1087) protein is Sugar fermentation stimulation protein homolog.